We begin with the raw amino-acid sequence, 29 residues long: Acidic phospholipase A2 Omo-E6 (29 aa).

2 residues coordinate Ca(2+): Tyr-27 and Gly-29.

Requires Ca(2+) as cofactor. Expressed by the venom gland.

Its subcellular location is the secreted. It carries out the reaction a 1,2-diacyl-sn-glycero-3-phosphocholine + H2O = a 1-acyl-sn-glycero-3-phosphocholine + a fatty acid + H(+). Functionally, snake venom phospholipase A2 (PLA2) that inhibits the ADP- and collagen-induced human platelet aggregation. Exhibits strong hydrolytic activities and prefers the anionic micelles (dPPC with deoxycholate) to the zwitterionic micelles (dPPC with Triton X-100). PLA2 catalyzes the calcium-dependent hydrolysis of the 2-acyl groups in 3-sn-phosphoglycerides. This chain is Acidic phospholipase A2 Omo-E6, found in Ovophis monticola (Chinese mountain pitviper).